Here is a 242-residue protein sequence, read N- to C-terminus: Large ribosomal subunit protein uL1 (242 aa).

This sequence belongs to the universal ribosomal protein uL1 family. As to quaternary structure, part of the 50S ribosomal subunit.

In terms of biological role, binds directly to 23S rRNA. The L1 stalk is quite mobile in the ribosome, and is involved in E site tRNA release. Functionally, protein L1 is also a translational repressor protein, it controls the translation of the L11 operon by binding to its mRNA. This Persephonella marina (strain DSM 14350 / EX-H1) protein is Large ribosomal subunit protein uL1.